Consider the following 346-residue polypeptide: Eukaryotic translation initiation factor 3 subunit I (346 aa).

WD repeat units lie at residues 8–49, 50–91, 145–184, 189–228, and 286–325; these read GHER…GTYH, GHQG…KTWD, CEDS…LLYN, ELNQ…VLKT, and GHFG…FDFM.

Belongs to the eIF-3 subunit I family. As to quaternary structure, component of the eukaryotic translation initiation factor 3 (eIF-3) complex.

It is found in the cytoplasm. Functionally, component of the eukaryotic translation initiation factor 3 (eIF-3) complex, which is involved in protein synthesis of a specialized repertoire of mRNAs and, together with other initiation factors, stimulates binding of mRNA and methionyl-tRNAi to the 40S ribosome. The eIF-3 complex specifically targets and initiates translation of a subset of mRNAs involved in cell proliferation. The sequence is that of Eukaryotic translation initiation factor 3 subunit I (tif-34) from Neurospora crassa (strain ATCC 24698 / 74-OR23-1A / CBS 708.71 / DSM 1257 / FGSC 987).